Reading from the N-terminus, the 338-residue chain is Inorganic pyrophosphatase (338 aa).

Arg129 serves as a coordination point for diphosphate. Asp166, Asp171, and Asp203 together coordinate Mg(2+).

This sequence belongs to the PPase family. In terms of assembly, component of the NURF complex composed of Caf1-55, E(bx), Nurf-38 and Iswi. Mg(2+) serves as cofactor.

It localises to the cytoplasm. The protein localises to the nucleus. The enzyme catalyses diphosphate + H2O = 2 phosphate + H(+). In terms of biological role, component of NURF (nucleosome remodeling factor), a complex which catalyzes ATP-dependent nucleosome sliding and facilitates transcription of chromatin. NURF is required for homeotic gene expression, proper larval blood cell development, normal male X chromosome morphology, ecdysteroid signaling and metamorphosis. Inorganic pyrophosphatase (PPase), hydrolyzes inorganic pyrophosphate to inorganic phosphate, essential for driving critical biosynthetic reactions including transcription, replication, and DNA repair. This is Inorganic pyrophosphatase (Nurf-38) from Drosophila melanogaster (Fruit fly).